A 371-amino-acid chain; its full sequence is S-adenosylmethionine:tRNA ribosyltransferase-isomerase (371 aa).

The protein belongs to the QueA family. Monomer.

The protein resides in the cytoplasm. It carries out the reaction 7-aminomethyl-7-carbaguanosine(34) in tRNA + S-adenosyl-L-methionine = epoxyqueuosine(34) in tRNA + adenine + L-methionine + 2 H(+). The protein operates within tRNA modification; tRNA-queuosine biosynthesis. Transfers and isomerizes the ribose moiety from AdoMet to the 7-aminomethyl group of 7-deazaguanine (preQ1-tRNA) to give epoxyqueuosine (oQ-tRNA). The chain is S-adenosylmethionine:tRNA ribosyltransferase-isomerase from Nitratidesulfovibrio vulgaris (strain ATCC 29579 / DSM 644 / CCUG 34227 / NCIMB 8303 / VKM B-1760 / Hildenborough) (Desulfovibrio vulgaris).